Here is a 194-residue protein sequence, read N- to C-terminus: Potassium-transporting ATPase KdpC subunit (194 aa).

A helical transmembrane segment spans residues 12-34 (LFLLLLTGGVYPLLTTALGQWWF).

It belongs to the KdpC family. In terms of assembly, the system is composed of three essential subunits: KdpA, KdpB and KdpC.

Its subcellular location is the cell inner membrane. Part of the high-affinity ATP-driven potassium transport (or Kdp) system, which catalyzes the hydrolysis of ATP coupled with the electrogenic transport of potassium into the cytoplasm. This subunit acts as a catalytic chaperone that increases the ATP-binding affinity of the ATP-hydrolyzing subunit KdpB by the formation of a transient KdpB/KdpC/ATP ternary complex. The chain is Potassium-transporting ATPase KdpC subunit from Salmonella agona (strain SL483).